The sequence spans 591 residues: L-fucose isomerase (591 aa).

Residues E338 and D362 each act as proton acceptor in the active site. Mn(2+)-binding residues include E338, D362, and H529.

It belongs to the L-fucose isomerase family. It depends on Mn(2+) as a cofactor.

Its subcellular location is the cytoplasm. The enzyme catalyses L-fucose = L-fuculose. It participates in carbohydrate degradation; L-fucose degradation; L-lactaldehyde and glycerone phosphate from L-fucose: step 1/3. Its function is as follows. Converts the aldose L-fucose into the corresponding ketose L-fuculose. The protein is L-fucose isomerase of Phocaeicola vulgatus (strain ATCC 8482 / DSM 1447 / JCM 5826 / CCUG 4940 / NBRC 14291 / NCTC 11154) (Bacteroides vulgatus).